The following is a 146-amino-acid chain: Acidic phospholipase A2 S5-32M (146 aa).

Positions 1-19 (MYPAHLLVLLAVCVSLLGA) are cleaved as a signal peptide. Positions 20-27 (ASIPPQPL) are excised as a propeptide. Intrachain disulfides connect Cys-38–Cys-98, Cys-54–Cys-145, Cys-56–Cys-72, Cys-71–Cys-126, Cys-78–Cys-119, Cys-87–Cys-112, and Cys-105–Cys-117. Tyr-55, Gly-57, and Gly-59 together coordinate Ca(2+). Residue His-75 is part of the active site. Asp-76 lines the Ca(2+) pocket. Asp-120 is an active-site residue.

It belongs to the phospholipase A2 family. Group I subfamily. D49 sub-subfamily. The cofactor is Ca(2+). In terms of tissue distribution, expressed by the venom gland.

It is found in the secreted. It catalyses the reaction a 1,2-diacyl-sn-glycero-3-phosphocholine + H2O = a 1-acyl-sn-glycero-3-phosphocholine + a fatty acid + H(+). Its function is as follows. Snake venom phospholipase A2 (PLA2) that inhibits collagen-induced platelet aggregation. PLA2 catalyzes the calcium-dependent hydrolysis of the 2-acyl groups in 3-sn-phosphoglycerides. This chain is Acidic phospholipase A2 S5-32M, found in Austrelaps superbus (Lowland copperhead snake).